The chain runs to 535 residues: High-affinity fructose transporter ght6 (535 aa).

Residues 1–9 lie on the Cytoplasmic side of the membrane; it reads MAKILTIVM. A helical membrane pass occupies residues 10-30; the sequence is LVFVSMAGWMFGADTGSIGGI. The Extracellular portion of the chain corresponds to 31-58; that stretch reads TNMRDFQSRYADRYDPVTDTYSYSSARQ. A helical membrane pass occupies residues 59–79; the sequence is GLLVGMVNTGTTVGCLLSSPL. Residues 80–87 lie on the Cytoplasmic side of the membrane; it reads GDRFGKRK. Residues 88–108 form a helical membrane-spanning segment; it reads CIMGWTLVYITGVIVQLTTIP. The Extracellular segment spans residues 109–112; sequence SWVQ. The chain crosses the membrane as a helical span at residues 113-133; the sequence is MMVAKIWTGLGIGALSVIAPG. The Cytoplasmic portion of the chain corresponds to 134–144; it reads YQSESSPPHIR. Residues 145–165 form a helical membrane-spanning segment; it reads GAIVTTYQLFITLGIFIAACI. The Extracellular portion of the chain corresponds to 166-181; that stretch reads NMGTHKYTTHPEAQWR. Residues 182–202 traverse the membrane as a helical segment; the sequence is VPIGINLLWGILMFFGMLFLP. The Cytoplasmic portion of the chain corresponds to 203 to 268; that stretch reads ESPRYLAVKG…IFSNEIRYRT (66 aa). The helical transmembrane segment at 269 to 287 threads the bilayer; the sequence is LLGMGVMAFQQLTGNNYFF. Topologically, residues 288–303 are extracellular; that stretch reads YYGTQVFRGTGLNSPF. Residues 304-324 traverse the membrane as a helical segment; the sequence is LAALILDAVNFGCTFGAIFVL. The Cytoplasmic segment spans residues 325-330; sequence EYFGRR. The chain crosses the membrane as a helical span at residues 331–351; that stretch reads GPLIVGGVWQSICFFIYASVG. Over 352–365 the chain is Extracellular; it reads DRALTRPNGTSNHR. An N-linked (GlcNAc...) asparagine glycan is attached at Asn359. Residues 366–386 form a helical membrane-spanning segment; it reads AGAVMIVFSCLFIFSFAQTWA. Topologically, residues 387 to 406 are cytoplasmic; sequence PAAYVIVGESYPIRYRSKCA. Residues 407 to 427 traverse the membrane as a helical segment; sequence AVATASNWFWNFMISFFTPFI. The Extracellular portion of the chain corresponds to 428-434; it reads SNSIGFK. The chain crosses the membrane as a helical span at residues 435–455; sequence YGYVFAACNLCAAIIIFLFAK. The Cytoplasmic segment spans residues 456–535; sequence ETKGLTLEEI…PQQVTNPVGL (80 aa). Residues 484 to 508 show a composition bias toward basic and acidic residues; the sequence is DREDIKQSDSEKERGPTSKLHEYVE. The segment at 484–535 is disordered; sequence DREDIKQSDSEKERGPTSKLHEYVEHAPNSYASTHSTESENYPQQVTNPVGL. Over residues 513 to 535 the composition is skewed to polar residues; that stretch reads SYASTHSTESENYPQQVTNPVGL.

This sequence belongs to the major facilitator superfamily. Sugar transporter (TC 2.A.1.1) family.

It is found in the membrane. Functionally, high-affinity fructose transporter. In Schizosaccharomyces pombe (strain 972 / ATCC 24843) (Fission yeast), this protein is High-affinity fructose transporter ght6 (ght6).